We begin with the raw amino-acid sequence, 132 residues long: NADPH-dependent 7-cyano-7-deazaguanine reductase (132 aa).

Cysteine 34 serves as the catalytic Thioimide intermediate. The active-site Proton donor is the aspartate 41. Residues 56–58 (IEL) and 75–76 (HE) each bind substrate.

It belongs to the GTP cyclohydrolase I family. QueF type 1 subfamily.

It localises to the cytoplasm. The catalysed reaction is 7-aminomethyl-7-carbaguanine + 2 NADP(+) = 7-cyano-7-deazaguanine + 2 NADPH + 3 H(+). It participates in tRNA modification; tRNA-queuosine biosynthesis. Functionally, catalyzes the NADPH-dependent reduction of 7-cyano-7-deazaguanine (preQ0) to 7-aminomethyl-7-deazaguanine (preQ1). This is NADPH-dependent 7-cyano-7-deazaguanine reductase from Vesicomyosocius okutanii subsp. Calyptogena okutanii (strain HA).